A 439-amino-acid polypeptide reads, in one-letter code: Actin-related protein 3 (439 aa).

Residues 40 to 71 (PSAGTGGSGSGRPAVANKPSFLTGGAGPGGHL) form a disordered region.

It belongs to the actin family. ARP3 subfamily. Component of the Arp2/3 complex composed.

Its subcellular location is the cytoplasm. It localises to the cytoskeleton. Functions as ATP-binding component of the Arp2/3 complex which is involved in regulation of actin polymerization and together with an activating nucleation-promoting factor (NPF) mediates the formation of branched actin networks. Seems to contact the pointed end of the daughter actin filament. This chain is Actin-related protein 3 (arp-3), found in Neurospora crassa (strain ATCC 24698 / 74-OR23-1A / CBS 708.71 / DSM 1257 / FGSC 987).